The following is a 158-amino-acid chain: UPF0260 protein RHE_CH01262 (158 aa).

It belongs to the UPF0260 family.

The sequence is that of UPF0260 protein RHE_CH01262 from Rhizobium etli (strain ATCC 51251 / DSM 11541 / JCM 21823 / NBRC 15573 / CFN 42).